A 1106-amino-acid polypeptide reads, in one-letter code: MEEQLIQAVEIASNPLANAGPDVTSQALQFLEHLKTITHESWSVGWSVWSARNPQDNGPKYSQNARMFGLMLVDDFLANRISLSTDPAAAVATLQQSAVEYIQNEYVAGSGDASVAYIKNKFAQVLAVLLLQTYNLPPPYTLLPTLLSMIRAHPAASPSQQSTLQLPINPLTTDLVLRVLHDLSVTLGSDVTLRAVRSKERLQRDAVIRDEIRANHASNIADSVWRIVEEGFNRVNQGEHASNPNSASGVRSMNFTNAVDLTAAATKIVEDYVSWIDINLVVTNQTVPLLFNVLHHPIPKIRTAAADALHGIVSKGMKPADKLSLAQALNLPQVITPLESRTRTGPSAQNGQSDTSDSNIEFREHLAHLTNGLVLEMCKILEESAAEESTRAAAEDLLNSLLPLVLAFLSDEYDDASEQTFSGVNMILSIYKKARRRGAELTGARAEFLSNLIGVALQKMRFDDEAEWPAGSFGAAEDDDDDDDEEDAKFLEMRRSLQTIVGAIAAIDDKLFSTSVAQLVLSTFASFETSSSDSDGQISWQQIELALYVIHFYGDVMTTATAAPKVGLSPAMFVQSPEAGSKGRAPKLGNEALAGLPLSNLGEMVQKLVQSNVSSFPHPAVQLQFFECLVRYSNFFAARSGCVLDALPAFLDWRGVHHEKLGVCKRVNYLLYRFVRDLRAVAAVPMDYVERLLQGLQDLLVVRAELPQVDADEDPLIKATAPAGYFDSQLYLFETSGILVSLLNNAPNDQVVLLKAISEPLSEQMRQAVQAFQRNPTDLTSVLQVHHLMLALSSLSKGFPDLSPTSTQPEPQWVGVFKSITEQVLVSIGAMNSFSVVREAARGAFARMVSTCGKAVLPYIPGLIDALLSEVTSAELVDFVNFLSLVVNKYKDDVRSIVDQLLLILVERIFFFLNQGVTGTDDAVEKSELQKAYMNLLSSMVQSGMESVFVSDKNVGQLETVLQSVVFYSTNSDAACQRTAFSILHRLVASWAGSSAVNGSTEATLPGFERFIYEHLVPLIFEAPAKDTFDFKDAQSQIVLTEISTLAKTIFQKRGDEMIQFLLEVYLPGINCPPQLAQDFTTNLTTLDSKAFKKYLDAFITRSRGG.

The segment at 336–357 (TPLESRTRTGPSAQNGQSDTSD) is disordered. Over residues 343–357 (RTGPSAQNGQSDTSD) the composition is skewed to polar residues.

Belongs to the exportin family.

Its subcellular location is the nucleus. The protein resides in the cytoplasm. Its function is as follows. tRNA nucleus export receptor which facilitates tRNA translocation across the nuclear pore complex. Involved in pre-tRNA splicing, probably by affecting the interaction of pre-tRNA with splicing endonuclease. The sequence is that of Exportin-T (LOS1) from Mycosarcoma maydis (Corn smut fungus).